A 474-amino-acid polypeptide reads, in one-letter code: Proline--tRNA ligase (474 aa).

The protein belongs to the class-II aminoacyl-tRNA synthetase family. ProS type 3 subfamily. Homodimer.

Its subcellular location is the cytoplasm. It catalyses the reaction tRNA(Pro) + L-proline + ATP = L-prolyl-tRNA(Pro) + AMP + diphosphate. In terms of biological role, catalyzes the attachment of proline to tRNA(Pro) in a two-step reaction: proline is first activated by ATP to form Pro-AMP and then transferred to the acceptor end of tRNA(Pro). This chain is Proline--tRNA ligase, found in Mycoplasma mycoides subsp. mycoides SC (strain CCUG 32753 / NCTC 10114 / PG1).